The following is a 248-amino-acid chain: N-acylneuraminate-9-phosphatase (248 aa).

Mg(2+) is bound at residue aspartate 12. 5 residues coordinate phosphate: leucine 13, aspartate 14, threonine 131, asparagine 132, and lysine 164. A Mg(2+)-binding site is contributed by aspartate 14. Aspartate 189 is a binding site for Mg(2+).

It belongs to the HAD-like hydrolase superfamily. NANP family. Mg(2+) serves as cofactor.

It catalyses the reaction N-acetylneuraminate 9-phosphate + H2O = N-acetylneuraminate + phosphate. The catalysed reaction is N-glycoloylneuraminate 9-phosphate + H2O = N-glycoloylneuraminate + phosphate. It functions in the pathway amino-sugar metabolism; N-acetylneuraminate biosynthesis. With respect to regulation, inhibited by calcium. Inhibited by vanadate, sodium orthovanadate and phosphonate. Its function is as follows. Catalyzes the dephosphorylation of N-acylneuraminate 9-phosphate (Neu5Ac-9-P) to N-acetylneuraminic acid (Neu5Ac or sialic acid). Can also use N-glycoloylneuraminate 9-phosphate as substrate. The protein is N-acylneuraminate-9-phosphatase of Rattus norvegicus (Rat).